Reading from the N-terminus, the 423-residue chain is MAKTIQAIRGMNDCAPTESPLWQWIEAQVRNVLNSYGYSEVRMPIVESTPLFARAIGEVTDVVSKEMYTFWDNDEQLTLRPEGTAGCVRAAIEHGWIYNNEQRLWYIGPMFRHERPQKGRYRQFHQVGVEVFGIANPEIDAELIMLTYRLWKALGIDQHVTLQLNSIGSLEARANYRSALVGFLENHQDLMSDEEKERLVRNPLRILDTKNPELQKVLDNAPKLLDYLDDESRTHFEQLCSLLDAVGIQYEINPKLVRGLDYYNKTVFEWVTSALGAQGTVCGGGRYDGLVEQLGGHATPSIGFAMGLERLVLLVQEVNPNVPAKSAVDIYVVYQGEGATLAAFELAEKVRSELPHLNTMLHCSSGNFKKQFKRADKSGATLALVIGESEVQNKQVVVKHLQGGTDQQTLDLVNIIDYLQTQF.

It belongs to the class-II aminoacyl-tRNA synthetase family. In terms of assembly, homodimer.

It localises to the cytoplasm. It carries out the reaction tRNA(His) + L-histidine + ATP = L-histidyl-tRNA(His) + AMP + diphosphate + H(+). This Haemophilus influenzae (strain ATCC 51907 / DSM 11121 / KW20 / Rd) protein is Histidine--tRNA ligase (hisS).